Here is a 270-residue protein sequence, read N- to C-terminus: Large ribosomal subunit protein uL10 (270 aa).

The disordered stretch occupies residues 234–270 (VTELEAGKTRPKREGNRRQAMNGDEMDEDQSSDEDSD). Residues 238 to 250 (EAGKTRPKREGNR) show a composition bias toward basic and acidic residues. Over residues 257-270 (DEMDEDQSSDEDSD) the composition is skewed to acidic residues.

It belongs to the universal ribosomal protein uL10 family. As to quaternary structure, associates with the pre-60S ribosomal particle.

The protein localises to the nucleus. Its subcellular location is the nucleolus. It is found in the cytoplasm. In terms of biological role, component of the ribosome assembly machinery. Nuclear paralog of the ribosomal protein P0, it binds pre-60S subunits at an early stage of assembly in the nucleolus, and is replaced by P0 in cytoplasmic pre-60S subunits and mature 80S ribosomes. In Chaetomium thermophilum (strain DSM 1495 / CBS 144.50 / IMI 039719) (Thermochaetoides thermophila), this protein is Large ribosomal subunit protein uL10.